The chain runs to 453 residues: MFFMDISGQRMLVIGWGKTGVASARFLISRGARVVVADEKNLSLENDVLSKLGEDHGQSVELADYGISALAQVDAVVPSPGVPPFHPVLKEAVKRCIPVISELELACRYLQTPMIAITGTNGKTTTTSLIGEILSGSGRKVFVGGNIGTPLVEYVTGPQTADCAVVEISSFQLQWVDQFHAFVSILLNTTCDHVNYHGSFEAYRAVKERIFNNQGKQDVAILNADEPDSAVLAESLSSPVFFFSTTKMVERGLYQEKDRLICLDGEGKQEFYPLSMIRLPGAHNVENVMAAILASRACGCSPENVINAISGFSGIAHRIEFTREIGGVKFYDDSKGTNVGAVKRAIETFSDPIILLMGGRDKDGDFETLSALLQDRVKALVIFGEARERIQERIGGIVPTVLTPSLKEAIAAARRQACAGDVVLLSPGCASFDEFADYKARGRFFKEEVRAFA.

Residue 119 to 125 (GTNGKTT) participates in ATP binding.

Belongs to the MurCDEF family.

The protein localises to the cytoplasm. It catalyses the reaction UDP-N-acetyl-alpha-D-muramoyl-L-alanine + D-glutamate + ATP = UDP-N-acetyl-alpha-D-muramoyl-L-alanyl-D-glutamate + ADP + phosphate + H(+). It functions in the pathway cell wall biogenesis; peptidoglycan biosynthesis. Cell wall formation. Catalyzes the addition of glutamate to the nucleotide precursor UDP-N-acetylmuramoyl-L-alanine (UMA). This is UDP-N-acetylmuramoylalanine--D-glutamate ligase from Syntrophus aciditrophicus (strain SB).